A 109-amino-acid polypeptide reads, in one-letter code: Putative double-stranded DNA mimic protein YciU (109 aa).

This sequence belongs to the putative dsDNA mimic protein family.

May act as a double-stranded DNA (dsDNA) mimic. Probably regulates the activity of a dsDNA-binding protein. This is Putative double-stranded DNA mimic protein YciU from Salmonella paratyphi B (strain ATCC BAA-1250 / SPB7).